Reading from the N-terminus, the 192-residue chain is Large ribosomal subunit protein uL5 (192 aa).

It belongs to the universal ribosomal protein uL5 family. In terms of assembly, part of the 50S ribosomal subunit; contacts the 5S rRNA and probably tRNA. Forms a bridge to the 30S subunit in the 70S ribosome.

Its function is as follows. This is one of the proteins that bind and probably mediate the attachment of the 5S RNA into the large ribosomal subunit, where it forms part of the central protuberance. In the 70S ribosome it contacts protein S13 of the 30S subunit (bridge B1b), connecting the 2 subunits; this bridge is implicated in subunit movement. May contact the P site tRNA; the 5S rRNA and some of its associated proteins might help stabilize positioning of ribosome-bound tRNAs. The sequence is that of Large ribosomal subunit protein uL5 from Aeropyrum pernix (strain ATCC 700893 / DSM 11879 / JCM 9820 / NBRC 100138 / K1).